Reading from the N-terminus, the 217-residue chain is Small ribosomal subunit protein uS3 (217 aa).

The KH type-2 domain occupies 38–106 (IRKFIDNELK…KVHINVIEIK (69 aa)).

This sequence belongs to the universal ribosomal protein uS3 family. As to quaternary structure, part of the 30S ribosomal subunit. Forms a tight complex with proteins S10 and S14.

Binds the lower part of the 30S subunit head. Binds mRNA in the 70S ribosome, positioning it for translation. This Staphylococcus haemolyticus (strain JCSC1435) protein is Small ribosomal subunit protein uS3.